The sequence spans 524 residues: Excitatory amino acid transporter 3 (524 aa).

The Cytoplasmic portion of the chain corresponds to Met-1–Asn-18. Residues Trp-19 to Val-38 traverse the membrane as a helical segment. Topologically, residues Arg-39 to Arg-61 are extracellular. Asn-43 is a glycosylation site (N-linked (GlcNAc...) asparagine). The helical transmembrane segment at Met-62 to Leu-82 threads the bilayer. Over Asp-83–Arg-93 the chain is Cytoplasmic. Residues Ala-94–Val-114 form a helical membrane-spanning segment. Na(+)-binding residues include Tyr-98, Thr-101, and Thr-102. The Extracellular portion of the chain corresponds to Ser-115–Leu-205. 2 N-linked (GlcNAc...) asparagine glycosylation sites follow: Asn-178 and Asn-195. A helical transmembrane segment spans residues Tyr-206–Met-229. Residues Gly-230–Asp-238 are Cytoplasmic-facing. Residues Phe-239–Ile-266 form a helical membrane-spanning segment. The Extracellular segment spans residues Ala-267–Met-286. Residues Val-287 to Val-308 traverse the membrane as a helical segment. The Cytoplasmic portion of the chain corresponds to Val-309–Pro-313. Residues Phe-314–Ala-344 constitute an intramembrane region (discontinuously helical). L-aspartate contacts are provided by Ser-331 and Ser-333. At Glu-345 to Arg-353 the chain is on the cytoplasmic side. The helical transmembrane segment at Ile-354 to Phe-380 threads the bilayer. Na(+) is bound by residues Gly-362, Thr-364, Asn-366, and Asp-368. Thr-370 is a binding site for L-aspartate. Residues Ile-381 to Gln-393 are Extracellular-facing. An intramembrane region (discontinuously helical) is located at residues Ile-394 to Gly-427. Na(+) contacts are provided by Ser-405, Ile-406, and Ala-408. Residue Val-411 coordinates L-aspartate. Topologically, residues Leu-428–Asp-440 are extracellular. A helical transmembrane segment spans residues Trp-441–Val-462. 3 residues coordinate L-aspartate: Arg-447, Thr-448, and Asn-451. The Na(+) site is built by Asn-451 and Asp-455. Topologically, residues Glu-463–Phe-524 are cytoplasmic. Ser-517 and Ser-522 each carry phosphoserine.

Belongs to the dicarboxylate/amino acid:cation symporter (DAACS) (TC 2.A.23) family. SLC1A1 subfamily. Homotrimer. Interacts with ARL6IP5. Interacts with RTN2 (via N-terminus); the interaction promotes cell surface expression of SLC1A1. Interacts with SORCS2; this interaction is important for normal expression at the cell membrane. Brain, but also small intestine, kidney, liver and heart.

The protein localises to the cell membrane. The protein resides in the apical cell membrane. It localises to the synapse. Its subcellular location is the synaptosome. It is found in the early endosome membrane. The protein localises to the late endosome membrane. The protein resides in the recycling endosome membrane. The enzyme catalyses K(+)(in) + L-glutamate(out) + 3 Na(+)(out) + H(+)(out) = K(+)(out) + L-glutamate(in) + 3 Na(+)(in) + H(+)(in). It carries out the reaction K(+)(in) + L-aspartate(out) + 3 Na(+)(out) + H(+)(out) = K(+)(out) + L-aspartate(in) + 3 Na(+)(in) + H(+)(in). The catalysed reaction is D-aspartate(out) + K(+)(in) + 3 Na(+)(out) + H(+)(out) = D-aspartate(in) + K(+)(out) + 3 Na(+)(in) + H(+)(in). It catalyses the reaction K(+)(in) + L-cysteine(out) + 3 Na(+)(out) + H(+)(out) = K(+)(out) + L-cysteine(in) + 3 Na(+)(in) + H(+)(in). Sodium-dependent, high-affinity amino acid transporter that mediates the uptake of L-glutamate and also L-aspartate and D-aspartate. Can also transport L-cysteine. Functions as a symporter that transports one amino acid molecule together with two or three Na(+) ions and one proton, in parallel with the counter-transport of one K(+) ion. Mediates Cl(-) flux that is not coupled to amino acid transport; this avoids the accumulation of negative charges due to aspartate and Na(+) symport. Plays an important role in L-glutamate and L-aspartate reabsorption in renal tubuli. Plays a redundant role in the rapid removal of released glutamate from the synaptic cleft, which is essential for terminating the postsynaptic action of glutamate. Contributes to glutathione biosynthesis and protection against oxidative stress via its role in L-glutamate and L-cysteine transport. Negatively regulated by ARL6IP5. The chain is Excitatory amino acid transporter 3 (SLC1A1) from Oryctolagus cuniculus (Rabbit).